A 322-amino-acid polypeptide reads, in one-letter code: Cysteine protease yopT1 (322 aa).

A disordered region spans residues 42–69; that stretch reads LSHSNRQKKLSATIKHNQSSRSMLDRKL. Catalysis depends on residues Cys-139, His-258, and Asp-274.

Belongs to the peptidase C58 family. In terms of assembly, interacts with human ARHA.

Its subcellular location is the secreted. Cysteine protease, which is translocated into infected cells and plays a central role in pathogenesis by cleaving the C-terminus end of the human small GTPase RhoA/ARHA, a regulator of cytoskeleton. Once cleaved, ARHA loses its lipid modification, and is released from the cell membrane, leading to the subsequent disruption of actin cytoskeleton of the host cell. This chain is Cysteine protease yopT1 (yopT1), found in Yersinia enterocolitica serotype O:8 / biotype 1B (strain NCTC 13174 / 8081).